The primary structure comprises 384 residues: MSSVPAPREYFLDSIRAWLMLLGIPFHISLIYSTHSWHVNSATPSWWLTLFNDFIHAFRMQVFFVISGYFSYMLFLRYPLKRWWKVRVERVGIPMLTAIPLLTLPQFILLQYVKEKTENWPTLSAYEKYNTLAWELISHLWFLLVLVILTTVSIGIFTWFPKRQETSKPRPAAISLVRLSLIFFLLGMAYAAIRRIIFIVYPAILSDGMFNFIVMQTLFYVPFFILGALAFIHPDLKARFTTPSRGCTLGAAVAFIAYLLNQRYGSGDAWMYETESVITMVMGLWMVNVVFSLGHRLLNFQSARVTYFVNASLFIYLVHHPLTLFFGAYITPHISSNLIGFLCGLIFVMGIALILYEIHLRIPLLKFLFSGKPPVKQESRAAIG.

The next 10 helical transmembrane spans lie at 17 to 37 (AWLM…THSW), 54 to 74 (FIHA…SYML), 91 to 111 (VGIP…ILLQ), 140 to 160 (LWFL…FTWF), 173 to 193 (AISL…YAAI), 212 to 232 (FIVM…LAFI), 240 to 260 (FTTP…AYLL), 274 to 294 (TESV…FSLG), 311 to 331 (ASLF…AYIT), and 338 to 358 (LIGF…LYEI).

This sequence belongs to the acyltransferase 3 family. OpgC subfamily.

It is found in the cell membrane. Its pathway is glycan metabolism; osmoregulated periplasmic glucan (OPG) biosynthesis. Its function is as follows. Necessary for the succinyl substitution of periplasmic glucans. Could catalyze the transfer of succinyl residues from the cytoplasmic side of the membrane to the nascent glucan backbones on the periplasmic side of the membrane. This Salmonella gallinarum (strain 287/91 / NCTC 13346) protein is Glucans biosynthesis protein C.